Consider the following 1394-residue polypeptide: ATP-dependent permease AUS1 (1394 aa).

Residues 1–420 (MSISKYFTPV…PLTTIGSYSR (420 aa)) are Cytoplasmic-facing. Residues 33 to 273 (KKSYDAEDSM…FRDTLGIEKD (241 aa)) enclose the ABC transporter 1 domain. A run of 6 helical transmembrane segments spans residues 421-443 (GSLT…PIAF), 468-490 (TVFD…YFLA), 497-519 (ARFF…LFAL), 529-551 (VANL…VIYL), 558-575 (FVWI…EAIL), and 636-658 (VWRN…LFAS). Over 659–1080 (QYIKPYFNKD…QYICTKRDMT (422 aa)) the chain is Cytoplasmic. The ABC transporter 2 domain occupies 751–978 (ISWKNINYTV…YFMSHDNTLV (228 aa)). An ATP-binding site is contributed by 782–789 (GESGAGKT). Transmembrane regions (helical) follow at residues 1081 to 1103 (YVMA…FWHI), 1107 to 1129 (IIGL…PLIN), 1156 to 1178 (VLLL…LFFV), 1193 to 1215 (AGVF…LWLI), 1224 to 1246 (AAVF…QPYS), and 1346 to 1368 (FGIE…YLTY). At 1369–1394 (VARIWPKVFKIITKVIPHRGKKPVQN) the chain is on the cytoplasmic side.

This sequence belongs to the ABC transporter superfamily. ABCG family. PDR (TC 3.A.1.205) subfamily.

Its subcellular location is the membrane. Functionally, transporter involved in the uptake of sterol. This Saccharomyces cerevisiae (strain ATCC 204508 / S288c) (Baker's yeast) protein is ATP-dependent permease AUS1 (AUS1).